The chain runs to 58 residues: UPF0391 membrane protein Shew185_1413 (58 aa).

Transmembrane regions (helical) follow at residues 6 to 26 and 28 to 48; these read LVFL…IAGA and AGIA…SLLI.

The protein belongs to the UPF0391 family.

The protein resides in the cell membrane. This is UPF0391 membrane protein Shew185_1413 from Shewanella baltica (strain OS185).